The primary structure comprises 96 residues: DNA-binding protein HmvA (96 aa).

Positions 52 to 55 are interaction with DNA; the sequence is KTIK.

This sequence belongs to the archaeal histone HMF family. As to quaternary structure, homodimer. Dimers then assemble into higher oligomers, with the DNA wrapped around the protein core.

The protein resides in the cytoplasm. It is found in the chromosome. Binds and compact DNA (95 to 150 base pairs) to form nucleosome-like structures that contain positive DNA supercoils. Increases the resistance of DNA to thermal denaturation (in vitro). The chain is DNA-binding protein HmvA (hmvA) from Methanocaldococcus jannaschii (strain ATCC 43067 / DSM 2661 / JAL-1 / JCM 10045 / NBRC 100440) (Methanococcus jannaschii).